A 377-amino-acid chain; its full sequence is Succinyl-diaminopimelate desuccinylase (377 aa).

Position 71 (histidine 71) interacts with Zn(2+). Aspartate 73 is a catalytic residue. Position 102 (aspartate 102) interacts with Zn(2+). Residue glutamate 132 is the Proton acceptor of the active site. Zn(2+) is bound by residues glutamate 133, glutamate 161, and histidine 346.

This sequence belongs to the peptidase M20A family. DapE subfamily. Homodimer. Zn(2+) serves as cofactor. Co(2+) is required as a cofactor.

It catalyses the reaction N-succinyl-(2S,6S)-2,6-diaminopimelate + H2O = (2S,6S)-2,6-diaminopimelate + succinate. It functions in the pathway amino-acid biosynthesis; L-lysine biosynthesis via DAP pathway; LL-2,6-diaminopimelate from (S)-tetrahydrodipicolinate (succinylase route): step 3/3. In terms of biological role, catalyzes the hydrolysis of N-succinyl-L,L-diaminopimelic acid (SDAP), forming succinate and LL-2,6-diaminopimelate (DAP), an intermediate involved in the bacterial biosynthesis of lysine and meso-diaminopimelic acid, an essential component of bacterial cell walls. The sequence is that of Succinyl-diaminopimelate desuccinylase from Rhizorhabdus wittichii (strain DSM 6014 / CCUG 31198 / JCM 15750 / NBRC 105917 / EY 4224 / RW1) (Sphingomonas wittichii).